Reading from the N-terminus, the 467-residue chain is Septin-10 (467 aa).

Positions 63-329 constitute a Septin-type G domain; it reads QGFCFNILCV…ELYRRCKLEE (267 aa). Residues 73 to 80 are G1 motif; the sequence is GETGIGKS. GTP contacts are provided by residues 73–80, Gly-128, 209–217, Gly-263, and Arg-278; these read GETGIGKS and KADTVSKTE. Residues 125 to 128 form a G3 motif region; sequence NTVG. Positions 208-211 are G4 motif; the sequence is AKAD.

Belongs to the TRAFAC class TrmE-Era-EngA-EngB-Septin-like GTPase superfamily. Septin GTPase family. Septins polymerize into heterooligomeric protein complexes that form filaments, and can associate with cellular membranes, actin filaments and microtubules. GTPase activity is required for filament formation. Interacts with ADGB. Proteolytically cleaved in vitro in a calmodulin-dependent manner.

It localises to the cytoplasm. The protein resides in the cytoskeleton. It is found in the cell projection. Its subcellular location is the cilium. The protein localises to the flagellum. Filament-forming cytoskeletal GTPase. May play a role in cytokinesis (Potential). The sequence is that of Septin-10 from Pongo abelii (Sumatran orangutan).